The primary structure comprises 148 residues: uncharacterized protein (148 aa).

Positions 1–23 (MKALVAVSAVAVVALLGVSSAQA) are cleaved as a signal peptide. The tract at residues 22–45 (QADPEADPGAGEANYGGPPSSPRL) is disordered.

It to M.leprae ML2452.

This is an uncharacterized protein from Mycobacterium bovis (strain ATCC BAA-935 / AF2122/97).